The following is a 609-amino-acid chain: Polyadenylate-binding protein 7 (609 aa).

4 RRM domains span residues 24–102 (ASLY…WSVR), 112–189 (GNVF…KFMK), 201–278 (TNLY…RAQK), and 304–381 (SNIY…IAQK). Residues 509 to 586 (EMKKSIQQRQ…AFEVLKSSKT (78 aa)) enclose the PABC domain.

This sequence belongs to the polyadenylate-binding protein type-1 family. In terms of tissue distribution, expressed predominantly in siliques.

The protein localises to the cytoplasm. Its subcellular location is the nucleus. In terms of biological role, binds the poly(A) tail of mRNA. Appears to be an important mediator of the multiple roles of the poly(A) tail in mRNA biogenesis, stability and translation. In Arabidopsis thaliana (Mouse-ear cress), this protein is Polyadenylate-binding protein 7 (PAB7).